Reading from the N-terminus, the 490-residue chain is MSDRGRTLMVQGTTSDAGKSTLVTALCRWLARRGVAVAPFKPQNMALNSAVTADGGEIGRAQAVQAQACRLAPHTDMNPVLLKPNTDIGAQVIIHGRAVTSMDAAAYHDYKRVAMEAVLASHARLAAAYRVVMVEGAGSPAEINLRANDIANMGFAEAVDCPVILVADIDRGGVFAHLVGTLELLSDSERERVRGFVINRFRGDIALLQPGLDWLEARTGKPVLGVLPYVSDLHLEAEDAIDTRQAAKTGPRLKVVVPVLPRISNHTDFDPLRLHPQVELSFVGPGQALPPADLIVLPGSKSVRADLAALRERGWDEAILRHLRYGGRLLGICGGLQMLGERLHDPLGLEGAAGSSAGLGLLALETTLEADKQLRNVQGRLSLEDAPLSGYEIHAGVTRGEALARPAVVLDDGRADGARSVDGNVMGTYLHGLFESTAACSALLRWAGLREVRAVDYQALRERDIERLADLVERHLDTGRLLALCGEPHA.

The GATase cobBQ-type domain maps to 252–439 (RLKVVVPVLP…LHGLFESTAA (188 aa)). Cysteine 333 acts as the Nucleophile in catalysis. Residue histidine 431 is part of the active site.

Belongs to the CobB/CobQ family. CobQ subfamily.

It participates in cofactor biosynthesis; adenosylcobalamin biosynthesis. In terms of biological role, catalyzes amidations at positions B, D, E, and G on adenosylcobyrinic A,C-diamide. NH(2) groups are provided by glutamine, and one molecule of ATP is hydrogenolyzed for each amidation. The sequence is that of Cobyric acid synthase from Pseudomonas paraeruginosa (strain DSM 24068 / PA7) (Pseudomonas aeruginosa (strain PA7)).